A 337-amino-acid polypeptide reads, in one-letter code: Monoacylglycerol lipase ABHD6 (337 aa).

Over 1–19 (MDLDVVNMFVIAGGTLALP) the chain is Extracellular. The helical; Signal-anchor for type II membrane protein transmembrane segment at 20–42 (ILAFVASFLLWPSALIRIYYWYW) threads the bilayer. At 43 to 337 (RRTLGMQVRY…HSTDNSKKLD (295 aa)) the chain is on the cytoplasmic side. The AB hydrolase-1 domain maps to 72 to 313 (PSILMLHGFS…CGHSVVMERP (242 aa)). Catalysis depends on S148, which acts as the Nucleophile. Active-site charge relay system residues include D278 and H306.

The protein belongs to the AB hydrolase superfamily.

It localises to the late endosome membrane. The protein resides in the lysosome membrane. It is found in the mitochondrion membrane. It catalyses the reaction Hydrolyzes glycerol monoesters of long-chain fatty acids.. It carries out the reaction 1-octanoylglycerol + H2O = octanoate + glycerol + H(+). The catalysed reaction is 1-decanoylglycerol + H2O = decanoate + glycerol + H(+). The enzyme catalyses 1-dodecanoylglycerol + H2O = dodecanoate + glycerol + H(+). It catalyses the reaction 1-tetradecanoylglycerol + H2O = tetradecanoate + glycerol + H(+). It carries out the reaction 2-hexadecanoylglycerol + H2O = glycerol + hexadecanoate + H(+). The catalysed reaction is 2-(9Z-octadecenoyl)-glycerol + H2O = glycerol + (9Z)-octadecenoate + H(+). The enzyme catalyses 1-(9Z-octadecenoyl)-glycerol + H2O = glycerol + (9Z)-octadecenoate + H(+). It catalyses the reaction 2-(9Z,12Z-octadecadienoyl)-glycerol + H2O = (9Z,12Z)-octadecadienoate + glycerol + H(+). It carries out the reaction 2-(5Z,8Z,11Z,14Z-eicosatetraenoyl)-glycerol + H2O = glycerol + (5Z,8Z,11Z,14Z)-eicosatetraenoate + H(+). The catalysed reaction is 1-(5Z,8Z,11Z,14Z-eicosatetraenoyl)-glycerol + H2O = glycerol + (5Z,8Z,11Z,14Z)-eicosatetraenoate + H(+). The enzyme catalyses 1-(9Z,12Z-octadecadienoyl)-glycerol + H2O = (9Z,12Z)-octadecadienoate + glycerol + H(+). It catalyses the reaction 3-(9Z-octadecenoyl)-sn-glycero-1-phospho-(3'-(9Z-octadecenoyl)-1'-sn-glycerol) + H2O = 3-(9Z-octadecenoyl)-sn-glycero-1-phospho-(1'-sn-glycerol) + (9Z)-octadecenoate + H(+). It carries out the reaction (S,S)-2-(9Z-octadecenoyl)-sn-glycero-1-phospho-(2'-(9Z-octadecenoyl)-1'-sn-glycerol) + H2O = (S,S)-2-(9Z-octadecenoyl)-sn-glycero-1-phospho-(1'-sn-glycerol) + (9Z)-octadecenoate + H(+). The catalysed reaction is (R,R)-2-(9Z-octadecenoyl)-sn-glycero-3-phospho-(2'-(9Z-octadecenoyl)-3'-sn-glycerol) + H2O = (R,R)-2-(9Z-octadecenoyl)-sn-glycero-3-phospho-(3'-sn-glycerol) + (9Z)-octadecenoate + H(+). Functionally, lipase that preferentially hydrolysis medium-chain saturated monoacylglycerols including 2-arachidonoylglycerol. Through 2-arachidonoylglycerol degradation may regulate endocannabinoid signaling pathways. Also has a lysophosphatidyl lipase activity with a preference for lysophosphatidylglycerol among other lysophospholipids. Also able to degrade bis(monoacylglycero)phosphate (BMP) and constitutes the major enzyme for BMP catabolism. BMP, also known as lysobisphosphatidic acid, is enriched in late endosomes and lysosomes and plays a key role in the formation of intraluminal vesicles and in lipid sorting. The protein is Monoacylglycerol lipase ABHD6 of Bos taurus (Bovine).